Reading from the N-terminus, the 82-residue chain is ATP synthase subunit c (82 aa).

2 consecutive transmembrane segments (helical) span residues 7–27 (AASV…PGIG) and 57–77 (FAFM…LLFA).

It belongs to the ATPase C chain family. In terms of assembly, F-type ATPases have 2 components, F(1) - the catalytic core - and F(0) - the membrane proton channel. F(1) has five subunits: alpha(3), beta(3), gamma(1), delta(1), epsilon(1). F(0) has four main subunits: a(1), b(1), b'(1) and c(10-14). The alpha and beta chains form an alternating ring which encloses part of the gamma chain. F(1) is attached to F(0) by a central stalk formed by the gamma and epsilon chains, while a peripheral stalk is formed by the delta, b and b' chains.

The protein localises to the cellular thylakoid membrane. Functionally, f(1)F(0) ATP synthase produces ATP from ADP in the presence of a proton or sodium gradient. F-type ATPases consist of two structural domains, F(1) containing the extramembraneous catalytic core and F(0) containing the membrane proton channel, linked together by a central stalk and a peripheral stalk. During catalysis, ATP synthesis in the catalytic domain of F(1) is coupled via a rotary mechanism of the central stalk subunits to proton translocation. Its function is as follows. Key component of the F(0) channel; it plays a direct role in translocation across the membrane. A homomeric c-ring of between 10-14 subunits forms the central stalk rotor element with the F(1) delta and epsilon subunits. This Prochlorococcus marinus (strain MIT 9303) protein is ATP synthase subunit c.